A 326-amino-acid chain; its full sequence is MAGLNPSQRREVVSLILSLTSNVNISHGDLTPIYERLTNLEASTELLHRSISDISTTVSNISANLQDMTHTLDDVTANLDGLRTTVTALQDSVSILSTNVTDLTNRSSAHAAILSSLQTTVDGNSTAISNLKSDISSNGLAITDLQDRVKSLESTASHGLSFSPPLSVADGVVSLDMDPYFCSQRVSLTSYSAEAQLMQFRWMARGTNGSSDTIDMTVNAHCHGRRTDYMMSSTGNLTVTSNVVLLTFDLSDITHIPSDLARLVPSAGFQAASFPVDVSFTRDSATHAYQAYGVYSSSRVFTITFPTGGDGTANIRSLTVRTGIDT.

The stretch at 60–80 (NISANLQDMTHTLDDVTANLD) forms a coiled coil.

The protein belongs to the orthoreovirus sigma C protein family. As to quaternary structure, homotrimer.

The protein localises to the virion. Its function is as follows. Structural protein responsible for cell attachment. Induces cell apoptosis. In Avian reovirus (strain S1133) (ARV), this protein is Sigma-C capsid protein.